We begin with the raw amino-acid sequence, 221 residues long: uncharacterized protein (221 aa).

4 helical membrane passes run 41–63 (TGNI…HSLI), 78–100 (AVMY…SSLS), 141–163 (ILAY…ISFL), and 178–200 (LILR…VNLF).

The protein resides in the cell membrane. This is an uncharacterized protein from Archaeoglobus fulgidus (strain ATCC 49558 / DSM 4304 / JCM 9628 / NBRC 100126 / VC-16).